Consider the following 264-residue polypeptide: Transformer-2 sex-determining protein (264 aa).

Positions 1–96 are disordered; that stretch reads MDREPLSSGR…HKSREHPQAS (96 aa). Over residues 13-22 the composition is skewed to basic residues; that stretch reads CSARYKHKRS. A compositionally biased stretch (low complexity) spans 23–33; the sequence is ASSSSAGTTSS. Phosphoserine is present on serine 40. Residues 47-61 show a composition bias toward basic residues; it reads SRRHQRSSSRRRSRS. The segment covering 71 to 85 has biased composition (basic and acidic residues); it reads EPRHRSGRSSRDRER. Residues 97–175 enclose the RRM domain; sequence RCIGVFGLNT…RRIRVDFSIT (79 aa). The interval 176 to 196 is linker; it reads QRAHTPTPGVYLGRQPRGKAP. The segment at 179–264 is disordered; that stretch reads HTPTPGVYLG…PQLRRTSSRY (86 aa). Threonine 180 is subject to Phosphothreonine. Over residues 191–206 the composition is skewed to basic residues; that stretch reads PRGKAPRSFSPRRGRR. Residues 207–234 show a composition bias toward basic and acidic residues; the sequence is VYHDRSASPYDNYRDRYDYRNDRYDRNL. Serine 212 and serine 214 each carry phosphoserine. Over residues 235–250 the composition is skewed to basic residues; that stretch reads RRSPSRNRYTRNRSYS. Serine 254 bears the Phosphoserine mark.

It belongs to the splicing factor SR family. Extensively phosphorylated on serine residues in the RS domain. In terms of tissue distribution, isoform Tmaj and isoform Tmin are expressed in males and females. Isoform msTmaj and isoform msTmin are present only in male germ cells.

Functionally, required for female sex determination in somatic cells and for spermatogenesis in male germ cells. Positive regulator of female-specific splicing and/or polyadenylation of doublesex (dsx) pre-mRNA. Splicing requires an enhancer complex, dsxRE (dsx repeat element: which contains six copies of a 13-nucleotide repeat and a purine-rich enhancer (PRE)). DsxRE is formed through cooperative interactions between tra, tra2 and the sr proteins, and these interactions require both the repeat sequences and PRE. PRE is required for specific binding of tra2 to the dsxRE. Protein-RNA and protein-protein interactions are involved in tra-2 dependent activation and repression of alternative splicing. Together with tra-2, plays a role in switching fru splicing from the male-specific pattern to the female-specific pattern through activation of the female-specific fru 5'-splice site. The protein is Transformer-2 sex-determining protein (tra2) of Drosophila melanogaster (Fruit fly).